A 319-amino-acid polypeptide reads, in one-letter code: MNPNYLDFEQPIADLEAKIQELRKASTGPAVNVETEVRALRDKLRVRTAQIFRDLSAWQVSQLARHPQRPYTLDYINTICDEFQELAGDRAYADDKAIVGGLGRIDGRPVVIIGHQKGRDTKTKVARNFGMPRPEGYRKALRLMKLAERFRLPLLTFIDTPGAYPGIGAEERGQSEAIARNLLEMAELKIPVICTVIGEGGSGGALAIGVGDRTLMLEYGTYSVISPEGCASILWKDAGKAKDAAEQLGLTARRLKDLSLVDKVIREPTGGAHRNPQQMGKRLKAVLLNELDALEKVPLETLLQQRYERLRSYGAYEGR.

Residues 32–293 form the CoA carboxyltransferase C-terminal domain; sequence NVETEVRALR…KAVLLNELDA (262 aa).

The protein belongs to the AccA family. Acetyl-CoA carboxylase is a heterohexamer composed of biotin carboxyl carrier protein (AccB), biotin carboxylase (AccC) and two subunits each of ACCase subunit alpha (AccA) and ACCase subunit beta (AccD).

Its subcellular location is the cytoplasm. The enzyme catalyses N(6)-carboxybiotinyl-L-lysyl-[protein] + acetyl-CoA = N(6)-biotinyl-L-lysyl-[protein] + malonyl-CoA. It functions in the pathway lipid metabolism; malonyl-CoA biosynthesis; malonyl-CoA from acetyl-CoA: step 1/1. Functionally, component of the acetyl coenzyme A carboxylase (ACC) complex. First, biotin carboxylase catalyzes the carboxylation of biotin on its carrier protein (BCCP) and then the CO(2) group is transferred by the carboxyltransferase to acetyl-CoA to form malonyl-CoA. This is Acetyl-coenzyme A carboxylase carboxyl transferase subunit alpha from Xanthomonas oryzae pv. oryzae (strain MAFF 311018).